We begin with the raw amino-acid sequence, 528 residues long: Exodeoxyribonuclease 7 large subunit (528 aa).

Residues 486–528 (QGDRDAVIDGESSGVLPPSAAPAPTRPTPRPKPASSSDQGSLF) are disordered. Residues 504–517 (SAAPAPTRPTPRPK) are compositionally biased toward pro residues.

It belongs to the XseA family. Heterooligomer composed of large and small subunits.

The protein localises to the cytoplasm. It catalyses the reaction Exonucleolytic cleavage in either 5'- to 3'- or 3'- to 5'-direction to yield nucleoside 5'-phosphates.. Its function is as follows. Bidirectionally degrades single-stranded DNA into large acid-insoluble oligonucleotides, which are then degraded further into small acid-soluble oligonucleotides. This chain is Exodeoxyribonuclease 7 large subunit, found in Caulobacter sp. (strain K31).